Consider the following 789-residue polypeptide: Glycerol-3-phosphate acyltransferase (789 aa).

The short motif at 276 to 281 (HRSYID) is the HXXXXD motif element.

Belongs to the GPAT/DAPAT family.

Its subcellular location is the cell membrane. It catalyses the reaction sn-glycerol 3-phosphate + an acyl-CoA = a 1-acyl-sn-glycero-3-phosphate + CoA. It participates in phospholipid metabolism; CDP-diacylglycerol biosynthesis; CDP-diacylglycerol from sn-glycerol 3-phosphate: step 1/3. This is Glycerol-3-phosphate acyltransferase from Mycobacterium bovis (strain ATCC BAA-935 / AF2122/97).